Reading from the N-terminus, the 231-residue chain is Nucleoside diphosphate kinase II, chloroplastic (231 aa).

Residues 1-62 (MVGATVVSKW…RNSASRRRLR (62 aa)) constitute a chloroplast transit peptide. The ATP site is built by K91, F139, R167, T173, R184, and N194. H197 functions as the Pros-phosphohistidine intermediate in the catalytic mechanism.

It belongs to the NDK family. As to quaternary structure, interacts with PHYA, MPK3 and MPK6. The cofactor is Mg(2+). In terms of processing, autophosphorylated.

It is found in the plastid. The protein localises to the chloroplast. It carries out the reaction a 2'-deoxyribonucleoside 5'-diphosphate + ATP = a 2'-deoxyribonucleoside 5'-triphosphate + ADP. It catalyses the reaction a ribonucleoside 5'-diphosphate + ATP = a ribonucleoside 5'-triphosphate + ADP. In terms of biological role, major role in the synthesis of nucleoside triphosphates other than ATP. The ATP gamma phosphate is transferred to the NDP beta phosphate via a ping-pong mechanism, using a phosphorylated active-site intermediate. May activate MPK3 and MPK6. May be involved in the regulation of cellular redox state and hydrogen peroxide-mediated MAP kinase signaling. The polypeptide is Nucleoside diphosphate kinase II, chloroplastic (NDPK2) (Arabidopsis thaliana (Mouse-ear cress)).